Consider the following 190-residue polypeptide: Potassium-transporting ATPase KdpC subunit (190 aa).

The chain crosses the membrane as a helical span at residues 10-30 (TFLFLLLITGGVYPLLTTALG).

This sequence belongs to the KdpC family. As to quaternary structure, the system is composed of three essential subunits: KdpA, KdpB and KdpC.

It localises to the cell inner membrane. Part of the high-affinity ATP-driven potassium transport (or Kdp) system, which catalyzes the hydrolysis of ATP coupled with the electrogenic transport of potassium into the cytoplasm. This subunit acts as a catalytic chaperone that increases the ATP-binding affinity of the ATP-hydrolyzing subunit KdpB by the formation of a transient KdpB/KdpC/ATP ternary complex. The protein is Potassium-transporting ATPase KdpC subunit of Escherichia coli O7:K1 (strain IAI39 / ExPEC).